We begin with the raw amino-acid sequence, 127 residues long: Small ribosomal subunit protein bS6 (127 aa).

This sequence belongs to the bacterial ribosomal protein bS6 family.

Functionally, binds together with bS18 to 16S ribosomal RNA. The polypeptide is Small ribosomal subunit protein bS6 (Sulfurovum sp. (strain NBC37-1)).